The chain runs to 545 residues: Probable intron-encoded endonuclease 4 (545 aa).

A run of 7 helical transmembrane segments spans residues 1 to 21, 30 to 50, 81 to 101, 119 to 139, 140 to 160, 177 to 197, and 200 to 220; these read MYLS…FFGR, LITC…FFEV, LTVA…IYSI, LFTF…MFVG, WEGV…RIAA, FLTI…YATV, and LAPY…LIGA. Residues 1-239 form a ndh-5 exons 1 and 2 encoded region; it reads MYLSIIILPL…HVWLPMAMEG (239 aa). Residues 240 to 545 form a ndh-5 intron 2 encoded region; it reads FFSRAFLKLH…NNINKSDYNK (306 aa).

This sequence in the N-terminal section; belongs to the complex I subunit 5 family. The protein in the C-terminal section; belongs to the LAGLIDADG endonuclease family.

The protein resides in the mitochondrion membrane. Functionally, mitochondrial DNA endonuclease involved in intron homing. This is Probable intron-encoded endonuclease 4 from Neurospora crassa (strain ATCC 24698 / 74-OR23-1A / CBS 708.71 / DSM 1257 / FGSC 987).